The sequence spans 500 residues: Ephrin type-B receptor 3 (500 aa).

The 64-residue stretch at 1–64 (PLLVLDLIIQ…NPVDFSTSLY (64 aa)) folds into the Fibronectin type-III domain. Over 1–113 (PLLVLDLIIQ…ERSVQDLLPL (113 aa)) the chain is Extracellular. The segment at 76-103 (HLRRREELTTTTTGLKSREERFQKSDDP) is disordered. Residues 91 to 103 (KSREERFQKSDDP) show a composition bias toward basic and acidic residues. Residues 114–134 (IVGSASAGFVVILAMIVIAVV) traverse the membrane as a helical segment. Residues 135-500 (CLRRQRTGSE…QMSQTLPIRV (366 aa)) lie on the Cytoplasmic side of the membrane. At Y168 the chain carries Phosphotyrosine; by autocatalysis. Residues 187 to 450 (VKIEEVIGAG…QIVSTLDKFL (264 aa)) form the Protein kinase domain. Residues 193-201 (IGAGEFGEV) and K219 each bind ATP. D312 functions as the Proton acceptor in the catalytic mechanism. The region spanning 421 to 500 (LHQLMLECWV…QMSQTLPIRV (80 aa)) is the SAM domain. A PDZ-binding motif is present at residues 498–500 (IRV).

Belongs to the protein kinase superfamily. Tyr protein kinase family. Ephrin receptor subfamily. As to quaternary structure, heterotetramer upon binding of the ligand. The heterotetramer is composed of an ephrin dimer and a receptor dimer. Oligomerization is probably required to induce biological responses. Post-translationally, phosphorylated. Autophosphorylates upon ligand-binding. Autophosphorylation on Tyr-168 is required for interaction with SH2 domain-containing proteins. Widely expressed in the developing nervous system.

It localises to the cell membrane. The protein resides in the cell projection. It is found in the dendrite. It carries out the reaction L-tyrosyl-[protein] + ATP = O-phospho-L-tyrosyl-[protein] + ADP + H(+). Its function is as follows. Receptor tyrosine kinase which binds promiscuously transmembrane ephrin-B family ligands residing on adjacent cells, leading to contact-dependent bidirectional signaling into neighboring cells. The signaling pathway downstream of the receptor is referred to as forward signaling while the signaling pathway downstream of the ephrin ligand is referred to as reverse signaling. Generally has an overlapping and redundant function with EPHB2. Like EPHB2, functions in axon guidance during development. In addition to its role in axon guidance also plays an important redundant role with other ephrin-B receptors in development and maturation of dendritic spines and the formation of excitatory synapses. May control other aspects of development through regulation of cell migration and positioning. May play a role in early pattern formation within the developing nervous system. The polypeptide is Ephrin type-B receptor 3 (ephb3) (Danio rerio (Zebrafish)).